A 65-amino-acid polypeptide reads, in one-letter code: Cytochrome b-c1 complex subunit 9, mitochondrial (65 aa).

A helical membrane pass occupies residues 14–34 (IYVATIFGGAFAFQGFFDVAV).

It belongs to the UQCR10/QCR9 family. In terms of assembly, component of the ubiquinol-cytochrome c oxidoreductase (cytochrome b-c1 complex, complex III, CIII), a multisubunit enzyme composed of 10 subunits. The complex is composed of 3 respiratory subunits cytochrome b (COB), cytochrome c1 (CYT1) and Rieske protein (RIP1), 2 core protein subunits COR1 and QCR2, and 5 low-molecular weight protein subunits QCR6, QCR7, QCR8, QCR9 and QCR10. The complex exists as an obligatory dimer and forms supercomplexes (SCs) in the inner mitochondrial membrane with a monomer or a dimer of cytochrome c oxidase (complex IV, CIV), resulting in 2 different assemblies (supercomplexes III(2)IV and III(2)IV(2)).

The protein localises to the membrane. Its subcellular location is the mitochondrion inner membrane. Component of the ubiquinol-cytochrome c oxidoreductase, a multisubunit transmembrane complex that is part of the mitochondrial electron transport chain which drives oxidative phosphorylation. The complex plays an important role in the uptake of multiple carbon sources present in different host niches. The sequence is that of Cytochrome b-c1 complex subunit 9, mitochondrial from Candida albicans (strain SC5314 / ATCC MYA-2876) (Yeast).